The following is a 141-amino-acid chain: Galactose-6-phosphate isomerase subunit LacA (141 aa).

Belongs to the LacAB/RpiB family. As to quaternary structure, heteromultimeric protein consisting of LacA and LacB.

It catalyses the reaction aldehydo-D-galactose 6-phosphate = keto-D-tagatose 6-phosphate. Its pathway is carbohydrate metabolism; D-galactose 6-phosphate degradation; D-tagatose 6-phosphate from D-galactose 6-phosphate: step 1/1. The chain is Galactose-6-phosphate isomerase subunit LacA from Streptococcus pneumoniae (strain 70585).